The sequence spans 164 residues: UPF0304 protein YE1336 (164 aa).

The protein belongs to the UPF0304 family.

The sequence is that of UPF0304 protein YE1336 from Yersinia enterocolitica serotype O:8 / biotype 1B (strain NCTC 13174 / 8081).